Consider the following 466-residue polypeptide: MAALSNLKQCPPFSTLPDLALRHNHIPELERYPQINLNSELLANPAGQRYYGGQSFVSVNEGVLKRIARSFFNGGFWKTLEEARSPETREQAPLIAQAGDLIAQFLGLATGLRILPHTQQLSAERIAQFVETRDWLNSDVRYLAWNQHFFCLAVAGVDDVVRIYTKSSSATTATVLKSPSQTQITCMAWRPLCASEIVIGCRQGLCFWEVDSTLHLGRTNAPSEIFKYPNNLPITSMQWNKDGTQLATASIGDRSIIIWQPDTGMMQPLKRLGPPGSLLKWSPDNDWLFAATVDRVFRVWNCHQQWTTERWVCGPGGYVQTACWSPCGRFLLFVSSAEPILYRLQFVQQSLLSSSADEKEILPIADLNACSIDANRTLVGGPAQQLAWDPHGNYLVVTFKATNCIAVFRTFIQKFDLQISAAYYLSGETAAEHPSFICFQPLYEDNDRSVLTIAWSSGRIQYYAFD.

WD repeat units lie at residues 135–174, 179–218, 229–269, 271–310, and 378–418; these read WLNSDVRYLAWNQHFFCLAVAGVDDVVRIYTKSSSATTAT, PSQTQITCMAWRPLCASEIVIGCRQGLCFWEVDSTLHLGR, PNNL…MQPL, RLGPPGSLLKWSPDNDWLFAATVDRVFRVWNCHQQWTTER, and LVGG…FDLQ.

The protein localises to the nucleus. It is found in the nuclear pore complex. The protein resides in the cytoplasm. It localises to the cytoskeleton. Its subcellular location is the spindle. Its function is as follows. Involved in mitotic spindle assembly. The protein is Aladin of Drosophila melanogaster (Fruit fly).